Reading from the N-terminus, the 338-residue chain is (2Z,6E)-hedycaryol synthase (338 aa).

Positions 82 and 87 each coordinate Mg(2+). Positions 82–87 (DDQIDE) match the DDXXXE motif motif. Position 175 (R175) interacts with substrate. Mg(2+) contacts are provided by N221 and S225. The NXXXSXXXE motif signature appears at 221 to 229 (NDVFSVERE). Residue R228 participates in substrate binding. E229 serves as a coordination point for Mg(2+).

The protein belongs to the terpene synthase family. As to quaternary structure, homodimer. Mg(2+) is required as a cofactor.

It carries out the reaction (2E,6E)-farnesyl diphosphate + H2O = (2Z,6E)-hedycaryol + diphosphate. It participates in secondary metabolite biosynthesis; terpenoid biosynthesis. Functionally, catalyzes the conversion of (2E,6E)-farnesyl diphosphate (FPP) into (2Z,6E)-hedycaryol via a 1,11-cyclization. The polypeptide is (2Z,6E)-hedycaryol synthase (Kitasatospora setae (strain ATCC 33774 / DSM 43861 / JCM 3304 / KCC A-0304 / NBRC 14216 / KM-6054) (Streptomyces setae)).